The chain runs to 101 residues: Integration host factor subunit alpha (101 aa).

The interval 49-70 (FGNFQLRDKPQRPGRNPKTGEE) is disordered.

It belongs to the bacterial histone-like protein family. In terms of assembly, heterodimer of an alpha and a beta chain.

In terms of biological role, this protein is one of the two subunits of integration host factor, a specific DNA-binding protein that functions in genetic recombination as well as in transcriptional and translational control. This is Integration host factor subunit alpha from Nitrosospira multiformis (strain ATCC 25196 / NCIMB 11849 / C 71).